A 1013-amino-acid chain; its full sequence is Poly [ADP-ribose] polymerase 1 (1013 aa).

Alanine 2 bears the N-acetylalanine mark. The PARP-type 1 zinc finger occupies tyrosine 9–glycine 93. Zn(2+) is bound by residues cysteine 21 and cysteine 24. Serine 41 is subject to Phosphoserine. Residues histidine 53 and cysteine 56 each contribute to the Zn(2+) site. An N6-acetyllysine mark is found at lysine 97 and lysine 105. The segment at phenylalanine 113–lysine 203 adopts a PARP-type 2 zinc-finger fold. Positions 125 and 128 each coordinate Zn(2+). Residue lysine 131 is modified to N6-acetyllysine. Zn(2+)-binding residues include histidine 159 and cysteine 162. A phosphoserine mark is found at serine 177, serine 179, and serine 185. Lysine 192 participates in a covalent cross-link: Glycyl lysine isopeptide (Lys-Gly) (interchain with G-Cter in SUMO2). A disordered region spans residues proline 200–lysine 226. A Glycyl lysine isopeptide (Lys-Gly) (interchain with G-Cter in SUMO1); alternate cross-link involves residue lysine 203. Lysine 203 is covalently cross-linked (Glycyl lysine isopeptide (Lys-Gly) (interchain with G-Cter in SUMO2); alternate). Basic and acidic residues predominate over residues asparagine 204–lysine 226. 2 consecutive short sequence motifs (nuclear localization signal) follow at residues lysine 207–lysine 209 and lysine 221–lysine 226. One can recognise a PADR1 zinc-binding domain in the interval arginine 225–proline 359. Lysine 249 is covalently cross-linked (Glycyl lysine isopeptide (Lys-Gly) (interchain with G-Cter in SUMO2)). 2 positions are modified to phosphoserine: serine 274 and serine 277. The zinc ribbon stretch occupies residues glycine 290–glutamate 332. Residues cysteine 295, cysteine 298, cysteine 311, and cysteine 321 each coordinate Zn(2+). The interval valine 373 to lysine 523 is automodification domain. The BRCT domain occupies proline 385–histidine 476. Aspartate 387 is subject to PolyADP-ribosyl aspartic acid. 8 positions are modified to polyADP-ribosyl glutamic acid: glutamate 407, glutamate 413, glutamate 435, glutamate 437, glutamate 444, glutamate 445, glutamate 448, and glutamate 456. Residue lysine 467 forms a Glycyl lysine isopeptide (Lys-Gly) (interchain with G-Cter in SUMO2) linkage. The residue at position 484 (glutamate 484) is a PolyADP-ribosyl glutamic acid. Lysine 486 is covalently cross-linked (Glycyl lysine isopeptide (Lys-Gly) (interchain with G-Cter in SUMO1); alternate). Residue lysine 486 forms a Glycyl lysine isopeptide (Lys-Gly) (interchain with G-Cter in SUMO2); alternate linkage. A polyADP-ribosyl glutamic acid mark is found at glutamate 488 and glutamate 491. Residues proline 489–glycine 508 form a disordered region. Residues alanine 494–serine 503 show a composition bias toward low complexity. 3 positions are modified to ADP-ribosylserine: serine 499, serine 503, and serine 506. A Glycyl lysine isopeptide (Lys-Gly) (interchain with G-Cter in SUMO2) cross-link involves residue lysine 511. Residues glutamate 512 and glutamate 513 each carry the polyADP-ribosyl glutamic acid modification. Residue serine 518 is modified to ADP-ribosylserine. Glutamate 519 bears the PolyADP-ribosyl glutamic acid mark. N6-(ADP-ribosyl)lysine is present on lysine 520. Lysine 527 participates in a covalent cross-link: Glycyl lysine isopeptide (Lys-Gly) (interchain with G-Cter in SUMO2). Residues serine 541–phenylalanine 637 form the WGR domain. At threonine 593 the chain carries Phosphothreonine. N6-acetyllysine occurs at positions 599 and 620. The PARP alpha-helical domain maps to lysine 661 to arginine 778. Residue lysine 747 forms a Glycyl lysine isopeptide (Lys-Gly) (interchain with G-Cter in SUMO1); alternate linkage. A Glycyl lysine isopeptide (Lys-Gly) (interchain with G-Cter in SUMO2); alternate cross-link involves residue lysine 747. Residues serine 781 and serine 785 each carry the phosphoserine modification. Residues aspartate 787–tryptophan 1013 form the PARP catalytic domain. NAD(+)-binding positions include histidine 861–serine 863, glycine 870, arginine 877, and serine 903. Glutamate 987 serves as the catalytic For poly [ADP-ribose] polymerase activity.

Belongs to the ARTD/PARP family. In terms of assembly, homodimer; PARP-type zinc-fingers from separate PARP1 molecules form a dimer module that specifically recognizes DNA strand breaks. Heterodimer; heterodimerizes with PARP2. Interacts (via the PARP catalytic domain) with HPF1. Interacts with NMNAT1. Interacts with nucleosomes; with a preference for nucleosomes containing H2A.X. Interacts with APTX. Component of a base excision repair (BER) complex, containing at least XRCC1, PARP1, PARP2, POLB and LRIG3. Interacts with SRY. The SWAP complex consists of NPM1, NCL, PARP1 and SWAP70. Interacts with TIAM2. Interacts with PARP3; leading to activate PARP1 in absence of DNA. Interacts (when poly-ADP-ribosylated) with CHD1L (via macro domain). Interacts with the DNA polymerase alpha catalytic subunit POLA1; this interaction functions as part of the control of replication fork progression. Interacts with EEF1A1 and TXK. Interacts with RNF4. Interacts with RNF146. Interacts with ZNF423. Interacts with APLF. Interacts with SNAI1 (via zinc fingers); the interaction requires SNAI1 to be poly-ADP-ribosylated and non-phosphorylated (active) by GSK3B. Interacts (when poly-ADP-ribosylated) with PARP9. Interacts with NR4A3; activates PARP1 by improving acetylation of PARP1 and suppressing the interaction between PARP1 and SIRT1. Interacts (via catalytic domain) with PUM3; the interaction inhibits the poly-ADP-ribosylation activity of PARP1 and the degradation of PARP1 by CASP3 following genotoxic stress. Interacts with ZNF365. Interacts with RRP1B. Interacts with TIMELESS; the interaction is direct. Interacts with CGAS; leading to impede the formation of the PARP1-TIMELESS complex. Interacts with KHDC3L, the interaction is increased following the formation of DNA double-strand breaks. Interacts (when auto-poly-ADP-ribosylated) with XRCC1; leading to inhibit PARP1 ADP-ribosyltransferase activity. Interacts with SPINDOC; promoting PARP1 ADP-ribosyltransferase activity. Interacts with BANF1; leading to inhibit PARP1 ADP-ribosyltransferase activity in response to oxidative DNA damage. Interacts (when sumoylated and ubiquitinated) with VCP/p97; leading to its extraction from chromatin. Interacts with YARS1; promoting PARP1 ADP-ribosyltransferase activity. Interacts with PACMP micropeptide; Interacts with PACMP micropeptide; interaction. Interacts (when poly-ADP-ribosylated) with isoform 1 of MACROH2A1; MACROH2A1 specifically binds to poly-ADP-ribose chains and inhibits PARP1 activity, limiting the consumption of nuclear NAD(+). Interacts with CARM1; promoting recruitment to replication forks. Interacts with RECQL. Interacts with ZNF32; the interaction reshapes ZNF432 interacting proteins. Interacts with TPRN; TPRN interacts with a number of DNA damage response proteins, is recruited to sites of DNA damage and may play a role in DNA damage repair. Interacts (when auto-poly-ADP-ribosylated) with AIFM1. Poly-ADP-ribosylated on serine, glutamate and aspartate residues by autocatalysis. Auto-ADP-ribosylation on serine takes place following interaction with HPF1. Auto poly-ADP-ribosylation on serine residues promotes its dissociation from chromatin. Poly-ADP-ribosylated by PARP2; poly-ADP-ribosylation mediates the recruitment of CHD1L to DNA damage sites. Mono-ADP-ribosylated at Lys-520 by SIRT6 in response to oxidative stress, promoting recruitment to double-strand breaks (DSBs) sites. In terms of processing, S-nitrosylated, leading to inhibit transcription regulation activity. Post-translationally, phosphorylated at Thr-593 by PRKDC in response to DNA damage following virus infection, promoting its translocation to the cytosol. Phosphorylated by TXK. Proteolytically cleaved by caspase-3 (CASP3) and caspase-7 (CASP7) in response to apoptosis to generate the Poly [ADP-ribose] polymerase 1, processed N-terminus and Poly [ADP-ribose] polymerase 1, processed C-terminus forms. In terms of processing, sumoylated with SUMO1 or SUMO2 by PIAS4 following prolonged residence (trapping) to chromatin. Sumoylation promotes ubiquitination by RNF4 and removal from chromatin by VCP/p97. Post-translationally, ubiquitinated by RNF4 following sumoylation by PIAS4 in response to prolonged residence (trapping) to chromatin. Ubiquitination promotes removal from chromatin by VCP/p97. Widely expressed. Expression is correlated with proliferation, with higher levels occurring during early fetal development and organogenesis and in the highly proliferative cell compartments of adult. Expressed in B-cells that have been induced to switch to various Ig isotypes.

The protein resides in the chromosome. Its subcellular location is the nucleus. The protein localises to the nucleolus. It is found in the cytoplasm. It localises to the cytosol. It carries out the reaction NAD(+) + (ADP-D-ribosyl)n-acceptor = nicotinamide + (ADP-D-ribosyl)n+1-acceptor + H(+).. It catalyses the reaction L-seryl-[protein] + NAD(+) = O-(ADP-D-ribosyl)-L-seryl-[protein] + nicotinamide + H(+). The catalysed reaction is L-aspartyl-[protein] + NAD(+) = 4-O-(ADP-D-ribosyl)-L-aspartyl-[protein] + nicotinamide. The enzyme catalyses L-glutamyl-[protein] + NAD(+) = 5-O-(ADP-D-ribosyl)-L-glutamyl-[protein] + nicotinamide. It carries out the reaction L-tyrosyl-[protein] + NAD(+) = O-(ADP-D-ribosyl)-L-tyrosyl-[protein] + nicotinamide + H(+). It catalyses the reaction L-histidyl-[protein] + NAD(+) = N(tele)-(ADP-D-ribosyl)-L-histidyl-[protein] + nicotinamide + H(+). Its activity is regulated as follows. ADP-ribosyltransferase activity is regulated via an allosteric activation mechanism. In absence of activation signal, PARP1 is autoinhibited by the PARP alpha-helical domain (also named HD region), which prevents effective NAD(+)-binding. Activity is highly stimulated by signals, such as DNA strand breaks. Binding to damaged DNA unfolds the PARP alpha-helical domain, relieving autoinhibition. Poly-ADP-ribosyltransferase activity is tightly regulated and PARP1 is removed from damaged chromatin following initial poly-ADP-ribosylation of chromatin to avoid prolonged residence (trapping) that has cytotoxic consequences. A number of factors (VCP/p97) or post-translational modifications (auto-poly-ADP-ribosylation or ubiquitination) promote PARP1 removal from chromatin. Functionally, poly-ADP-ribosyltransferase that mediates poly-ADP-ribosylation of proteins and plays a key role in DNA repair. Mediates glutamate, aspartate, serine, histidine or tyrosine ADP-ribosylation of proteins: the ADP-D-ribosyl group of NAD(+) is transferred to the acceptor carboxyl group of target residues and further ADP-ribosyl groups are transferred to the 2'-position of the terminal adenosine moiety, building up a polymer with an average chain length of 20-30 units. Serine ADP-ribosylation of proteins constitutes the primary form of ADP-ribosylation of proteins in response to DNA damage. Specificity for the different amino acids is conferred by interacting factors, such as HPF1 and NMNAT1. Following interaction with HPF1, catalyzes serine ADP-ribosylation of target proteins; HPF1 confers serine specificity by completing the PARP1 active site. Also catalyzes tyrosine ADP-ribosylation of target proteins following interaction with HPF1. Following interaction with NMNAT1, catalyzes glutamate and aspartate ADP-ribosylation of target proteins; NMNAT1 confers glutamate and aspartate specificity. PARP1 initiates the repair of DNA breaks: recognizes and binds DNA breaks within chromatin and recruits HPF1, licensing serine ADP-ribosylation of target proteins, such as histones (H2BS6ADPr and H3S10ADPr), thereby promoting decompaction of chromatin and the recruitment of repair factors leading to the reparation of DNA strand breaks. HPF1 initiates serine ADP-ribosylation but restricts the polymerase activity of PARP1 in order to limit the length of poly-ADP-ribose chains. In addition to base excision repair (BER) pathway, also involved in double-strand breaks (DSBs) repair: together with TIMELESS, accumulates at DNA damage sites and promotes homologous recombination repair by mediating poly-ADP-ribosylation. Mediates the poly-ADP-ribosylation of a number of proteins, including itself, APLF, CHFR and NFAT5. In addition to proteins, also able to ADP-ribosylate DNA: catalyzes ADP-ribosylation of DNA strand break termini containing terminal phosphates and a 2'-OH group in single- and double-stranded DNA, respectively. Required for PARP9 and DTX3L recruitment to DNA damage sites. PARP1-dependent PARP9-DTX3L-mediated ubiquitination promotes the rapid and specific recruitment of 53BP1/TP53BP1, UIMC1/RAP80, and BRCA1 to DNA damage sites. PARP1-mediated DNA repair in neurons plays a role in sleep: senses DNA damage in neurons and promotes sleep, facilitating efficient DNA repair. In addition to DNA repair, also involved in other processes, such as transcription regulation, programmed cell death, membrane repair, adipogenesis and innate immunity. Acts as a repressor of transcription: binds to nucleosomes and modulates chromatin structure in a manner similar to histone H1, thereby altering RNA polymerase II. Acts both as a positive and negative regulator of transcription elongation, depending on the context. Acts as a positive regulator of transcription elongation by mediating poly-ADP-ribosylation of NELFE, preventing RNA-binding activity of NELFE and relieving transcription pausing. Acts as a negative regulator of transcription elongation in response to DNA damage by catalyzing poly-ADP-ribosylation of CCNT1, disrupting the phase separation activity of CCNT1 and subsequent activation of CDK9. Involved in replication fork progression following interaction with CARM1: mediates poly-ADP-ribosylation at replication forks, slowing fork progression. Poly-ADP-ribose chains generated by PARP1 also play a role in poly-ADP-ribose-dependent cell death, a process named parthanatos. Also acts as a negative regulator of the cGAS-STING pathway. Acts by mediating poly-ADP-ribosylation of CGAS: PARP1 translocates into the cytosol following phosphorylation by PRKDC and catalyzes poly-ADP-ribosylation and inactivation of CGAS. Acts as a negative regulator of adipogenesis: catalyzes poly-ADP-ribosylation of histone H2B on 'Glu-35' (H2BE35ADPr) following interaction with NMNAT1, inhibiting phosphorylation of H2B at 'Ser-36' (H2BS36ph), thereby blocking expression of pro-adipogenetic genes. Involved in the synthesis of ATP in the nucleus, together with NMNAT1, PARG and NUDT5. Nuclear ATP generation is required for extensive chromatin remodeling events that are energy-consuming. In terms of biological role, promotes AIFM1-mediated apoptosis. This form, which translocates into the cytoplasm following cleavage by caspase-3 (CASP3) and caspase-7 (CASP7) in response to apoptosis, is auto-poly-ADP-ribosylated and serves as a poly-ADP-ribose carrier to induce AIFM1-mediated apoptosis. This cleavage form irreversibly binds to DNA breaks and interferes with DNA repair, promoting DNA damage-induced apoptosis. In Mus musculus (Mouse), this protein is Poly [ADP-ribose] polymerase 1 (Parp1).